The chain runs to 948 residues: Translation initiation factor IF-2 (948 aa).

Disordered regions lie at residues 61 to 120 (IQAN…PALI), 162 to 243 (KSRE…TQSA), and 255 to 285 (QEKDKQEAKKAKKPSKPKATPTAKNNKSHKI). Positions 68–78 (KNPEQDNKDDL) are enriched in basic and acidic residues. Over residues 173-189 (SNTNNANSTNNANNVNN) the composition is skewed to low complexity. Basic and acidic residues predominate over residues 190–207 (AKKEISEVKKQEQEIKRH). Positions 208 to 219 (ENIKRRTGFRVI) are enriched in basic residues. Polar residues predominate over residues 230 to 243 (ENSVAESKKPTQSA). One can recognise a tr-type G domain in the interval 447-616 (ERPPVVTIMG…LIQADIMELK (170 aa)). The interval 456 to 463 (GHVDHGKT) is G1. 456-463 (GHVDHGKT) contributes to the GTP binding site. The G2 stretch occupies residues 481 to 485 (GITQH). The G3 stretch occupies residues 502–505 (DTPG). Residues 502–506 (DTPGH) and 556–559 (NKMD) contribute to the GTP site. Residues 556–559 (NKMD) form a G4 region. Residues 592–594 (SAK) are G5.

The protein belongs to the TRAFAC class translation factor GTPase superfamily. Classic translation factor GTPase family. IF-2 subfamily.

It is found in the cytoplasm. Its function is as follows. One of the essential components for the initiation of protein synthesis. Protects formylmethionyl-tRNA from spontaneous hydrolysis and promotes its binding to the 30S ribosomal subunits. Also involved in the hydrolysis of GTP during the formation of the 70S ribosomal complex. This is Translation initiation factor IF-2 from Helicobacter pylori (strain Shi470).